The sequence spans 269 residues: MNYRKIWIDANGPIPKDSDGRTDEIHHKDGNRENNDLDNLMCLSIQEHYDIHLAQKDYQACHAIKLRMKYSPEEISELASKAAKSREIQIFNIPEVRAKNIASIKSKIENGTFHLLDGEIQRKSNLNRVALGIHNFQQAEHIAKVKERNIAAIKEGTHVFCGGKMQSETQSKRVNDGSHHFLSEDHKKRTSAKTLEMVKNGTHPAQKEITCDFCGHIGKGPGFYLKHNDRCKLNPNRIQLNCPYCDKKDLSPSTYKRWHGDNCKARFND.

Functionally, this endonuclease is specific to the nrdB gene splice junction and is involved in intron homing. This Enterobacteria phage RB3 (Bacteriophage RB3) protein is Intron-associated endonuclease 3 (ITEVIIIR).